Reading from the N-terminus, the 397-residue chain is Odorant receptor 85a (397 aa).

Over 1–46 (MIFKYIQEPVLGSLFRSRDSLIYLNRSIDQMGWRLPPRTKPYWWLY) the chain is Cytoplasmic. A helical membrane pass occupies residues 47 to 67 (YIWTLVVIVLVFIFIPYGLIM). Residues 68–83 (TGIKEFKNFTTTDLFT) are Extracellular-facing. An N-linked (GlcNAc...) asparagine glycan is attached at Asn75. Residues 84 to 104 (YVQVPVNTNASIMKGIIVLFM) form a helical membrane-spanning segment. The Cytoplasmic segment spans residues 105-142 (RRRFSRAQKMMDAMDIRCTKMEEKVQVHRAAALCNRVV). A helical membrane pass occupies residues 143-163 (VIYHCIYFGYLSMALTGALVI). The Extracellular portion of the chain corresponds to 164–192 (GKTPFCLYNPLVNPDDHFYLATAIESVTM). The chain crosses the membrane as a helical span at residues 193–213 (AGIILANLILDVYPIIYVVVL). Residues 214-262 (RIHMELLSERIKTLRTDVEKGDDQHYAELVECVKDHKLIVEYGNTLRPM) are Cytoplasmic-facing. The helical transmembrane segment at 263–283 (ISATMFIQLLSVGLLLGLAAV) threads the bilayer. Residues 284–294 (SMQFYNTVMER) are Extracellular-facing. A helical membrane pass occupies residues 295–315 (VVSGVYTIAILSQTFPFCYVC). The Cytoplasmic segment spans residues 316-347 (EQLSSDCESLTNTLFHSKWIGAERRYRTTMLY). A helical membrane pass occupies residues 348–368 (FIHNVQQSILFTAGGIFPICL). At 369–397 (NTNIKMAKFAFSVVTIVNEMDLAEKLRRE) the chain is on the extracellular side.

This sequence belongs to the insect chemoreceptor superfamily. Heteromeric odorant receptor channel (TC 1.A.69) family. Or2a subfamily. Interacts with Orco. Complexes exist early in the endomembrane system in olfactory sensory neurons (OSNs), coupling these complexes to the conserved ciliary trafficking pathway. Expressed in olfactory sensory neurons in the antenna.

The protein resides in the cell membrane. In terms of biological role, odorant receptor which mediates acceptance or avoidance behavior, depending on its substrates. The odorant receptor repertoire encodes a large collection of odor stimuli that vary widely in identity, intensity, and duration. May form a complex with Orco to form odorant-sensing units, providing sensitive and prolonged odorant signaling and calcium permeability. The protein is Odorant receptor 85a (Or85a) of Drosophila melanogaster (Fruit fly).